The sequence spans 368 residues: tRNA-specific 2-thiouridylase MnmA (368 aa).

Residues 12-19 (GMSGGVDS) and Met38 each bind ATP. The tract at residues 98 to 100 (NPD) is interaction with target base in tRNA. The Nucleophile role is filled by Cys103. A disulfide bridge connects residues Cys103 and Cys200. Residue Gly128 coordinates ATP. Positions 150-152 (KDQ) are interaction with tRNA. The active-site Cysteine persulfide intermediate is Cys200. Residues 311 to 312 (RY) form an interaction with tRNA region.

The protein belongs to the MnmA/TRMU family.

The protein localises to the cytoplasm. The enzyme catalyses S-sulfanyl-L-cysteinyl-[protein] + uridine(34) in tRNA + AH2 + ATP = 2-thiouridine(34) in tRNA + L-cysteinyl-[protein] + A + AMP + diphosphate + H(+). In terms of biological role, catalyzes the 2-thiolation of uridine at the wobble position (U34) of tRNA, leading to the formation of s(2)U34. This is tRNA-specific 2-thiouridylase MnmA from Aeromonas hydrophila subsp. hydrophila (strain ATCC 7966 / DSM 30187 / BCRC 13018 / CCUG 14551 / JCM 1027 / KCTC 2358 / NCIMB 9240 / NCTC 8049).